The chain runs to 240 residues: Transcription factor bHLH47 (240 aa).

Positions 1–13 (MVSKTPSTSSDEA) are enriched in polar residues. Residues 1 to 26 (MVSKTPSTSSDEANATADERCRKGKV) are disordered. Residues 27–77 (PKRINKAVRERLKREHLNELFIELADTLELNQQNSGKASILCEATRFLKDV) enclose the bHLH domain. The stretch at 98 to 131 (VTTEKNELKEETSVLETEISKLQNEIEARANQSK) forms a coiled coil. The segment covering 128 to 138 (NQSKPDLNTSP) has biased composition (polar residues). Residues 128–153 (NQSKPDLNTSPAPEYHHHHYQQQHPE) are disordered.

In terms of assembly, homodimer. Forms heterodimer with PYEL proteins bHLH115, bHLH104 and ILR3. In terms of tissue distribution, expressed constitutively in roots, leaves, stems, and flowers.

It localises to the nucleus. The chain is Transcription factor bHLH47 (BHLH47) from Arabidopsis thaliana (Mouse-ear cress).